The primary structure comprises 624 residues: Na(+)/H(+) antiporter NhaA (624 aa).

The segment at 1–164 (MNPELPPNHL…TFFINGRRYD (164 aa)) is unknown. The segment at 165 to 624 (GPWDVRSLSE…NAQAEEEKNP (460 aa)) is na(+)/H(+) antiporter NhaA. The next 11 membrane-spanning stretches (helical) occupy residues 199-219 (GIMLLLATALAVVLSNSALGP), 240-260 (LSLRHWINDGLLVIFFLVVGL), 279-299 (LPIAAAIGGMAVPALLYLILV), 319-339 (GWGVPMATDTAFAIALIAMMG), 348-368 (VFLTAAAIVDDIGAIIVVAIF), 371-391 (GELHIAYLGSAVAIAGLLALL), 407-427 (IVLWVFVYASGIHATLAGIIL), 497-517 (FLVLPVFALANAGVVVETSVF), 521-541 (IPLMLGTATALVIGKPLGFIT), 565-585 (GAGALAGIGFTMSLFIASQAF), and 596-616 (IAIFGGSILSAIIGVAILWNA).

The protein belongs to the NhaA Na(+)/H(+) (TC 2.A.33) antiporter family.

Its subcellular location is the cell inner membrane. The catalysed reaction is Na(+)(in) + 2 H(+)(out) = Na(+)(out) + 2 H(+)(in). Na(+)/H(+) antiporter that extrudes sodium in exchange for external protons. The polypeptide is Na(+)/H(+) antiporter NhaA (Nitrosospira multiformis (strain ATCC 25196 / NCIMB 11849 / C 71)).